We begin with the raw amino-acid sequence, 289 residues long: ATP synthase gamma chain (289 aa).

It belongs to the ATPase gamma chain family. As to quaternary structure, F-type ATPases have 2 components, CF(1) - the catalytic core - and CF(0) - the membrane proton channel. CF(1) has five subunits: alpha(3), beta(3), gamma(1), delta(1), epsilon(1). CF(0) has three main subunits: a, b and c.

The protein resides in the cell inner membrane. Functionally, produces ATP from ADP in the presence of a proton gradient across the membrane. The gamma chain is believed to be important in regulating ATPase activity and the flow of protons through the CF(0) complex. This Nitrosococcus oceani (strain ATCC 19707 / BCRC 17464 / JCM 30415 / NCIMB 11848 / C-107) protein is ATP synthase gamma chain.